The chain runs to 1355 residues: NACHT, LRR and PYD domains-containing protein 1 homolog (1355 aa).

The 202-residue stretch at 257–458 (KTVILCGDSG…SVPLLCWMVC (202 aa)) folds into the NACHT domain. Position 263 to 270 (263 to 270 (GDSGRGKS)) interacts with ATP. Positions 977 to 1109 (DSDQWVQVEP…FHAKILQPMF (133 aa)) are ZU5. The FIIND domain maps to 977 to 1252 (DSDQWVQVEP…NKTESDLFQS (276 aa)). The UPA stretch occupies residues 1110–1252 (SPKTVLVKLG…NKTESDLFQS (143 aa)). Residues 1278–1354 (LIKSVENVDT…NLLNHLPSSD (77 aa)) form the CARD domain.

It belongs to the NLRP family. In terms of assembly, interacts with the C-terminal part of nlrp1 (NACHT, LRR and PYD domains-containing protein 1, C-terminus) in absence of pathogens and other damage-associated signals. As to quaternary structure, interacts with the N-terminal part of nlrp1 (NACHT, LRR and PYD domains-containing protein 1, N-terminus) in absence of pathogens and other damage-associated signals. Homomultimer; forms the nlrp1 inflammasome polymeric complex, a filament composed of homopolymers of this form in response to pathogens and other damage-associated signals. The nlrp1 inflammasome polymeric complex associates with pycard/asc. Interacts (via CARD domain) with pycard/asc (via CARD domain); leading to pro-inflammatory caspases (caspa and/or caspb) recruitment. Pro-caspase-a and pro-caspase-b filament formation increases local enzyme concentration, resulting in trans-autocleavage and activation. Active caspa and caspb then processes il1b and il18 precursors, leading to the release of mature cytokines in the extracellular milieu and inflammatory response. Autocatalytically cleaved. Autocatalytic cleavage in FIIND region occurs constitutively, prior to activation signals, and is required for inflammasome activity (IL1B release), possibly by facilitating pro-inflammatory caspases (caspa and/or caspb) binding. Both N- and C-terminal parts remain associated non-covalently. In terms of processing, ubiquitinated in response to pathogen-associated signals, leading to its degradation by the proteasome and subsequent release of the cleaved C-terminal part of the protein (NACHT, LRR and PYD domains-containing protein 1, C-terminus), which polymerizes and forms the nlrp1 inflammasome. Expressed in adult spleen, head kidney, gill and skin and also in the embryo.

It localises to the cytoplasm. The protein localises to the inflammasome. Its activity is regulated as follows. nlrp1 inflammasome is activated by pathogens and other damage-associated signals: activation promotes ubiquitination and degradation of the N-terminal part, releasing the cleaved C-terminal part of the protein (NACHT, LRR and PYD domains-containing protein 1, C-terminus), which polymerizes and forms the nlrp1 inflammasome. Functionally, acts as the sensor component of the nlrp1 inflammasome, which mediates inflammasome activation in response to various pathogen-associated signals, leading to subsequent pyroptosis. Inflammasomes are supramolecular complexes that assemble in the cytosol in response to pathogens and other damage-associated signals and play critical roles in innate immunity and inflammation. Acts as a recognition receptor (PRR): recognizes specific pathogens and other damage-associated signals, and mediates the formation of the inflammasome polymeric complex. In response to pathogen-associated signals, the N-terminal part of nlrp1 is degraded by the proteasome, releasing the cleaved C-terminal part of the protein (NACHT, LRR and PYD domains-containing protein 1, C-terminus), which polymerizes to initiate the formation of the inflammasome complex: the inflammasome recruits and activate pro-inflammatory caspases (caspa and/or caspb), leading to pyroptosis. Its function is as follows. Constitutes the precursor of the nlrp1 inflammasome, which mediates autoproteolytic processing within the FIIND domain to generate the N-terminal and C-terminal parts, which are associated non-covalently in absence of pathogens and other damage-associated signals. In terms of biological role, regulatory part that prevents formation of the nlrp1 inflammasome: in absence of pathogens and other damage-associated signals, interacts with the C-terminal part of nlrp1 (NACHT, LRR and PYD domains-containing protein 1, C-terminus), preventing activation of the nlrp1 inflammasome. In response to pathogen-associated signals, this part is ubiquitinated and degraded by the proteasome, releasing the cleaved C-terminal part of the protein, which polymerizes and forms the nlrp1 inflammasome. Constitutes the active part of the nlrp1 inflammasome. In absence of pathogens and other damage-associated signals, interacts with the N-terminal part of nlrp1 (NACHT, LRR and PYD domains-containing protein 1, N-terminus), preventing activation of the nlrp1 inflammasome. In response to pathogen-associated signals, the N-terminal part of nlrp1 is degraded by the proteasome, releasing this form, which polymerizes to form the nlrp1 inflammasome complex: the nlrp1 inflammasome complex then directly recruits and activates pro-inflammatory caspases (caspa and/or caspb) activation, leading to subsequent pyroptosis. The protein is NACHT, LRR and PYD domains-containing protein 1 homolog of Danio rerio (Zebrafish).